The primary structure comprises 139 residues: NADH-quinone oxidoreductase subunit A (139 aa).

A run of 3 helical transmembrane segments spans residues 16–36 (GLFI…ASLL), 69–89 (LVAM…AWAV), and 94–114 (VGWE…AGLV).

Belongs to the complex I subunit 3 family. In terms of assembly, NDH-1 is composed of 14 different subunits. Subunits NuoA, H, J, K, L, M, N constitute the membrane sector of the complex.

It localises to the cell inner membrane. It catalyses the reaction a quinone + NADH + 5 H(+)(in) = a quinol + NAD(+) + 4 H(+)(out). Its function is as follows. NDH-1 shuttles electrons from NADH, via FMN and iron-sulfur (Fe-S) centers, to quinones in the respiratory chain. The immediate electron acceptor for the enzyme in this species is believed to be ubiquinone. Couples the redox reaction to proton translocation (for every two electrons transferred, four hydrogen ions are translocated across the cytoplasmic membrane), and thus conserves the redox energy in a proton gradient. The chain is NADH-quinone oxidoreductase subunit A from Chromohalobacter salexigens (strain ATCC BAA-138 / DSM 3043 / CIP 106854 / NCIMB 13768 / 1H11).